The following is a 996-amino-acid chain: PDZ domain-containing protein C23G3.12c (996 aa).

The disordered stretch occupies residues 1-35 (MSIKKRARAGSKSDDIGNKTPKKNGIEHEATKSSE). 3 consecutive PDZ domains span residues 280-358 (SRLG…QRGS), 745-827 (EFRA…LREG), and 860-930 (RAVR…STFD). Residues 972 to 996 (KNPSMGFTIDEEVDDNTFDTEGEQQ) are disordered. Residues 980 to 996 (IDEEVDDNTFDTEGEQQ) show a composition bias toward acidic residues.

The protein belongs to the peptidase S1C family.

The protein is PDZ domain-containing protein C23G3.12c of Schizosaccharomyces pombe (strain 972 / ATCC 24843) (Fission yeast).